Here is an 88-residue protein sequence, read N- to C-terminus: Protein transport protein SBH2 (88 aa).

Positions 1 to 42 are disordered; that stretch reads MAASVPPGGQRILQKRRQAQSIKEKQAKQTPTSTRQAGYGGS. Residues 1 to 61 are Cytoplasmic-facing; it reads MAASVPPGGQ…DEANGFRVDS (61 aa). The segment covering 28–42 has biased composition (polar residues); it reads KQTPTSTRQAGYGGS. The helical transmembrane segment at 62-82 threads the bilayer; the sequence is LVVLFLSVGFIFSVIALHLLT.

This sequence belongs to the SEC61-beta family. Component of the heterotrimeric Ssh1 complex, which is composed of SSH1, SBH2 and SSS1.

It is found in the endoplasmic reticulum membrane. In terms of biological role, part of the Ssh1 complex, which probably is the major component of a channel-forming translocon complex that may function exclusively in the cotranslational pathway of protein endoplasmic reticulum (ER) import. The polypeptide is Protein transport protein SBH2 (SBH2) (Saccharomyces cerevisiae (strain ATCC 204508 / S288c) (Baker's yeast)).